Consider the following 140-residue polypeptide: Large ribosomal subunit protein uL16 (140 aa).

The segment at 1-24 (MALAPARTKYRKSQKGSRAGNAKR) is disordered.

The protein belongs to the universal ribosomal protein uL16 family. Part of the 50S ribosomal subunit.

Functionally, binds 23S rRNA and is also seen to make contacts with the A and possibly P site tRNAs. This chain is Large ribosomal subunit protein uL16, found in Opitutus terrae (strain DSM 11246 / JCM 15787 / PB90-1).